We begin with the raw amino-acid sequence, 566 residues long: Urease subunit alpha (566 aa).

Positions 128-566 constitute a Urease domain; sequence GGIDTHIHFI…LPMAQRYFLF (439 aa). Residues histidine 133, histidine 135, and lysine 216 each contribute to the Ni(2+) site. Residue lysine 216 is modified to N6-carboxylysine. Histidine 218 serves as a coordination point for substrate. 2 residues coordinate Ni(2+): histidine 245 and histidine 271. The active-site Proton donor is histidine 319. Aspartate 359 is a Ni(2+) binding site.

Belongs to the metallo-dependent hydrolases superfamily. Urease alpha subunit family. As to quaternary structure, heterotrimer of UreA (gamma), UreB (beta) and UreC (alpha) subunits. Three heterotrimers associate to form the active enzyme. It depends on Ni cation as a cofactor. Carboxylation allows a single lysine to coordinate two nickel ions.

The protein localises to the cytoplasm. The enzyme catalyses urea + 2 H2O + H(+) = hydrogencarbonate + 2 NH4(+). It participates in nitrogen metabolism; urea degradation; CO(2) and NH(3) from urea (urease route): step 1/1. This Pseudomonas fluorescens (strain Pf0-1) protein is Urease subunit alpha.